A 216-amino-acid chain; its full sequence is Protein-L-isoaspartate O-methyltransferase 1 (216 aa).

Ser-60 is a catalytic residue.

This sequence belongs to the methyltransferase superfamily. L-isoaspartyl/D-aspartyl protein methyltransferase family.

The protein localises to the cytoplasm. The catalysed reaction is [protein]-L-isoaspartate + S-adenosyl-L-methionine = [protein]-L-isoaspartate alpha-methyl ester + S-adenosyl-L-homocysteine. In terms of biological role, catalyzes the methyl esterification of L-isoaspartyl residues in peptides and proteins that result from spontaneous decomposition of normal L-aspartyl and L-asparaginyl residues. It plays a role in the repair and/or degradation of damaged proteins. This chain is Protein-L-isoaspartate O-methyltransferase 1 (pcm1), found in Archaeoglobus fulgidus (strain ATCC 49558 / DSM 4304 / JCM 9628 / NBRC 100126 / VC-16).